We begin with the raw amino-acid sequence, 452 residues long: MLSQLRQYHPVIELETVAHLLKSEYGDEQERAQLGQLGLQIVNRYDGYECPYKALFEAAVSDSKATISHAAGLHYSSANDESHTNDTDNEHRDDNVMKHLLSGKYLEALALLDANSKMDKSPFKHMEQFAKIMIFSRNYENVQELELRLQYSLSDDRIDQISKDQQPSQNLSDEKESICRIKLYICTSYFIEGRYFECSSKFYKFYIEDPKTMMKILTSKVDGDALLLLPELKTMIAASTLVSIPMNSYDELISIDELTELFDTVDILSRSLKLLINTSFKCFLALWNNEFQKTLSRCYLLNKSWETAERLMKMKIYCFYLKLSKTLTISYLSEKLGIEYDEVKESVERLICSANLYFHLDGDVISYSKRSIVDSTVRTLDENCRHINELLDKQRVRNDKLKEMISGNLLEEEQTIRKSDTAKTSNNQEIMDIDDVQFLSDDLEQVDSCISD.

In terms of domain architecture, PCI spans 205-374 (FYIEDPKTMM…ISYSKRSIVD (170 aa)).

Component of a COP9 signalosome-like (CSN) complex.

It localises to the cytoplasm. Its subcellular location is the nucleus. Its function is as follows. Component of the COP9 signalosome (CSN) complex that acts as an regulator of the ubiquitin (Ubl) conjugation pathway by mediating the deneddylation of the cullin subunit of SCF-type E3 ubiquitin-protein ligase complexes The CSN complex is involved in the regulation of the mating pheromone response. PCI8 may also be involved in transcriptional and translational control. In Candida glabrata (strain ATCC 2001 / BCRC 20586 / JCM 3761 / NBRC 0622 / NRRL Y-65 / CBS 138) (Yeast), this protein is COP9 signalosome complex subunit 11 (PCI8).